We begin with the raw amino-acid sequence, 149 residues long: Prefoldin subunit alpha (149 aa).

The protein belongs to the prefoldin alpha subunit family. In terms of assembly, heterohexamer of two alpha and four beta subunits.

Its subcellular location is the cytoplasm. Its function is as follows. Molecular chaperone capable of stabilizing a range of proteins. Seems to fulfill an ATP-independent, HSP70-like function in archaeal de novo protein folding. This Methanoculleus marisnigri (strain ATCC 35101 / DSM 1498 / JR1) protein is Prefoldin subunit alpha.